We begin with the raw amino-acid sequence, 205 residues long: ATP phosphoribosyltransferase (205 aa).

Belongs to the ATP phosphoribosyltransferase family. Short subfamily.

It is found in the cytoplasm. The catalysed reaction is 1-(5-phospho-beta-D-ribosyl)-ATP + diphosphate = 5-phospho-alpha-D-ribose 1-diphosphate + ATP. The protein operates within amino-acid biosynthesis; L-histidine biosynthesis; L-histidine from 5-phospho-alpha-D-ribose 1-diphosphate: step 1/9. In terms of biological role, catalyzes the condensation of ATP and 5-phosphoribose 1-diphosphate to form N'-(5'-phosphoribosyl)-ATP (PR-ATP). Has a crucial role in the pathway because the rate of histidine biosynthesis seems to be controlled primarily by regulation of HisG enzymatic activity. The polypeptide is ATP phosphoribosyltransferase (Thermococcus gammatolerans (strain DSM 15229 / JCM 11827 / EJ3)).